The following is a 235-amino-acid chain: MSSPDQDPREAIAQGDDEVIDVRRGMFGAAGTGDTSGYGRLVRTVTLPGSSPRPYGSYFDDVVDTLTESLQSNGIEFHQAIEKVVVYRDELTLHVDRAALPHVAQHLRDDPRLRFEMCLGVSGVHYPHETGRELHAVYPLQSITHNRRVRLEVAVPDEDPHIPSLYRIYPTTDWHERETYDFFGIVFDGHPSLTRIEMPDDWHGHPQRKDYPLGGIPVEYKGAQIPPPDERRAYN.

Belongs to the complex I 30 kDa subunit family. In terms of assembly, NDH-1 is composed of 14 different subunits. Subunits NuoB, C, D, E, F, and G constitute the peripheral sector of the complex.

Its subcellular location is the cell membrane. The catalysed reaction is a quinone + NADH + 5 H(+)(in) = a quinol + NAD(+) + 4 H(+)(out). Its function is as follows. NDH-1 shuttles electrons from NADH, via FMN and iron-sulfur (Fe-S) centers, to quinones in the respiratory chain. The immediate electron acceptor for the enzyme in this species is believed to be a menaquinone. Couples the redox reaction to proton translocation (for every two electrons transferred, four hydrogen ions are translocated across the cytoplasmic membrane), and thus conserves the redox energy in a proton gradient. This chain is NADH-quinone oxidoreductase subunit C, found in Mycolicibacterium paratuberculosis (strain ATCC BAA-968 / K-10) (Mycobacterium paratuberculosis).